We begin with the raw amino-acid sequence, 876 residues long: Alanine--tRNA ligase (876 aa).

Residues His-564, His-568, Cys-666, and His-670 each coordinate Zn(2+).

The protein belongs to the class-II aminoacyl-tRNA synthetase family. It depends on Zn(2+) as a cofactor.

It is found in the cytoplasm. It catalyses the reaction tRNA(Ala) + L-alanine + ATP = L-alanyl-tRNA(Ala) + AMP + diphosphate. In terms of biological role, catalyzes the attachment of alanine to tRNA(Ala) in a two-step reaction: alanine is first activated by ATP to form Ala-AMP and then transferred to the acceptor end of tRNA(Ala). Also edits incorrectly charged Ser-tRNA(Ala) and Gly-tRNA(Ala) via its editing domain. This chain is Alanine--tRNA ligase, found in Porphyromonas gingivalis (strain ATCC BAA-308 / W83).